The following is a 248-amino-acid chain: ATP synthase subunit a (248 aa).

The next 5 helical transmembrane spans lie at 31-51 (GQVL…VLLG), 90-110 (VPYV…GNLF), 129-149 (INTT…AGIS), 195-215 (VIAV…MILF), and 216-236 (LFTG…YIGE).

It belongs to the ATPase A chain family. In terms of assembly, F-type ATPases have 2 components, CF(1) - the catalytic core - and CF(0) - the membrane proton channel. CF(1) has five subunits: alpha(3), beta(3), gamma(1), delta(1), epsilon(1). CF(0) has four main subunits: a, b, b' and c.

It is found in the cellular thylakoid membrane. Its function is as follows. Key component of the proton channel; it plays a direct role in the translocation of protons across the membrane. The sequence is that of ATP synthase subunit a from Synechococcus sp. (strain JA-3-3Ab) (Cyanobacteria bacterium Yellowstone A-Prime).